Reading from the N-terminus, the 251-residue chain is HTH-type transcriptional regulator UlaR (251 aa).

The 56-residue stretch at 3–58 (EAQRHQILLEMLAQLGFVTVEKVVERLGISPATARRDINKLDERGKLKKVRNGAEA) folds into the HTH deoR-type domain. Residues 20 to 39 (VTVEKVVERLGISPATARRD) constitute a DNA-binding region (H-T-H motif).

It is found in the cytoplasm. Functionally, represses ulaG and the ulaABCDEF operon. In Shigella sonnei (strain Ss046), this protein is HTH-type transcriptional regulator UlaR.